A 286-amino-acid polypeptide reads, in one-letter code: Meiotically up-regulated gene 64 protein (286 aa).

Its subcellular location is the cytoplasm. Has a role in meiosis. The sequence is that of Meiotically up-regulated gene 64 protein (mug64) from Schizosaccharomyces pombe (strain 972 / ATCC 24843) (Fission yeast).